Consider the following 365-residue polypeptide: uncharacterized protein (365 aa).

Residues 45–289 (FSIGKSLTII…LKEVKKSNPK (245 aa)) form the Radical SAM core domain. The [4Fe-4S] cluster site is built by cysteine 60, cysteine 68, and cysteine 71.

It depends on [4Fe-4S] cluster as a cofactor.

This is an uncharacterized protein from Methanocaldococcus jannaschii (strain ATCC 43067 / DSM 2661 / JAL-1 / JCM 10045 / NBRC 100440) (Methanococcus jannaschii).